Here is a 295-residue protein sequence, read N- to C-terminus: CBY1-interacting BAR domain-containing protein 1 (295 aa).

A mitochondrion-targeting transit peptide spans 1–49 (MMSRTPDARARDTQTKQIQENITSVEKHFGDLCQLFAAYVRKTARLRDK). Residues 12 to 222 (DTQTKQIQEN…NVDEEGDLEV (211 aa)) form a BAR-like region. Residues 111–185 (KREDLKQTQS…KQKIRDIKKV (75 aa)) adopt a coiled-coil conformation. Positions 243-265 (SKLSLNRTGTSMSKSGTMQSRTS) are enriched in polar residues. Residues 243-295 (SKLSLNRTGTSMSKSGTMQSRTSSRQRKRDDEEDEEEDDEDEDDLEEVTDDEH) form a disordered region. Positions 273–295 (DEEDEEEDDEDEDDLEEVTDDEH) are enriched in acidic residues.

It belongs to the CIBAR family.

It is found in the cytoplasm. Its subcellular location is the cytoskeleton. The protein localises to the microtubule organizing center. The protein resides in the centrosome. It localises to the centriole. It is found in the cell projection. Its subcellular location is the cilium. The protein localises to the nucleus. The protein resides in the mitochondrion inner membrane. It localises to the flagellum. In terms of biological role, plays a critical role in regulating mitochondrial ultrastructure and function by maintaining the integrity of mitochondrial morphology, particularly the organization of cristae. Plays a crucial role in ciliogenesis. Plays a key role in the correct positioning of the annulus, a septin-based ring structure in the sperm flagellum, serving both as a physical barrier and a membrane diffusion barrier that separates the midpiece (MP) from the principal piece (PP). This is CBY1-interacting BAR domain-containing protein 1 (cibar1) from Danio rerio (Zebrafish).